The primary structure comprises 276 residues: Digeranylgeranylglyceryl phosphate synthase (276 aa).

Helical transmembrane passes span 14-34, 40-60, 92-112, 146-166, 202-222, 224-244, and 256-276; these read NCIL…GHFP, LLIF…NDYF, FAVG…LGVI, GAVA…AFLV, VGVL…KASV, VGYY…YLIL, and QKLL…AAIV.

Belongs to the UbiA prenyltransferase family. DGGGP synthase subfamily. Requires Mg(2+) as cofactor.

It is found in the cell membrane. The enzyme catalyses sn-3-O-(geranylgeranyl)glycerol 1-phosphate + (2E,6E,10E)-geranylgeranyl diphosphate = 2,3-bis-O-(geranylgeranyl)-sn-glycerol 1-phosphate + diphosphate. It participates in membrane lipid metabolism; glycerophospholipid metabolism. Prenyltransferase that catalyzes the transfer of the geranylgeranyl moiety of geranylgeranyl diphosphate (GGPP) to the C2 hydroxyl of (S)-3-O-geranylgeranylglyceryl phosphate (GGGP). This reaction is the second ether-bond-formation step in the biosynthesis of archaeal membrane lipids. This is Digeranylgeranylglyceryl phosphate synthase from Thermococcus onnurineus (strain NA1).